The sequence spans 564 residues: NADPH oxidase 1 (564 aa).

Topologically, residues 1–9 (MGNWVVNHW) are cytoplasmic. Residues 10-30 (FSVLFLVVWLGLNVFLFVDAF) traverse the membrane as a helical segment. Residues 31–44 (LKYEKADKYYYTRK) are Extracellular-facing. The chain crosses the membrane as a helical span at residues 45 to 72 (ILGSTLACARASALCLNFNSTLILLPVC). In terms of domain architecture, Ferric oxidoreductase spans 54 to 283 (RASALCLNFN…LAPVILYICE (230 aa)). Over 73 to 102 (RNLLSFLRGTCSFCSRTLRKQLDHNLTFHK) the chain is Cytoplasmic. The heme site is built by H101 and H115. A helical membrane pass occupies residues 103 to 123 (LVAYMICLHTAIHIIAHLFNF). The Extracellular portion of the chain corresponds to 124–168 (DCYSRSRQATDGSLASILSSLSHDEKKGGSWLNPIQSRNTTVEYV). N162 carries an N-linked (GlcNAc...) asparagine glycan. The helical transmembrane segment at 169–189 (TFTSIAGLTGVIMTIALILMV) threads the bilayer. The Cytoplasmic portion of the chain corresponds to 190–206 (TSATEFIRRSYFEVFWY). A helical membrane pass occupies residues 207–227 (THHLFIFYILGLGIHGIGGIV). The heme site is built by H209 and H221. Topologically, residues 228-396 (RGQTEESMNE…TASEDVFQYE (169 aa)) are extracellular. A glycan (N-linked (GlcNAc...) asparagine) is linked at N236. One can recognise an FAD-binding FR-type domain in the interval 284–391 (RILRFYRSQQ…DGPFGTASED (108 aa)). An FAD-binding site is contributed by 338-344 (HPFTLTS). Residues 397 to 417 (VAVLVGAGIGVTPFASILKSI) traverse the membrane as a helical segment. Residues 397-536 (VAVLVGAGIG…GVFLCGPRTL (140 aa)) form an interaction with NOXO1 region. The Cytoplasmic portion of the chain corresponds to 418-564 (WYKFQCADHN…VQFYFNKENF (147 aa)). T430 is modified (phosphothreonine).

As to quaternary structure, NOX1, NOXA1, NOXO1, RAC1 and CYBA forms a functional multimeric complex supporting reactive oxygen species (ROS) production. Interacts with NOXO1. Interacts (via FAD-binding FR-type domain) with ARHGEF7 (via PH domain). The phosphorylated form at Thr-430 interacts with NOXA1 with greater affinity. FAD is required as a cofactor. In terms of processing, phosphorylation at Thr-430 mediated by PKC/PRKBC positively regulates its interaction with NOXA1 and enzyme activity. In terms of tissue distribution, detected in colon, uterus, prostate, and colon carcinoma, but not in peripheral blood leukocytes.

Its subcellular location is the cell projection. It localises to the invadopodium membrane. The protein resides in the cell membrane. It carries out the reaction NADPH + 2 O2 = 2 superoxide + NADP(+) + H(+). The oxidase activity is potentiated by NOXA1, NOXO1 and RAC1. NADPH oxidase that catalyzes the generation of superoxide from molecular oxygen utilizing NADPH as an electron donor. In Homo sapiens (Human), this protein is NADPH oxidase 1.